A 247-amino-acid polypeptide reads, in one-letter code: Sugar fermentation stimulation protein homolog (247 aa).

Belongs to the SfsA family.

The polypeptide is Sugar fermentation stimulation protein homolog (Aeromonas salmonicida (strain A449)).